An 80-amino-acid polypeptide reads, in one-letter code: UPF0154 protein SH1564 (80 aa).

The chain crosses the membrane as a helical span at residues 4-24 (WLAILLIIVALIGGLVGGFFL).

Belongs to the UPF0154 family.

It localises to the membrane. The protein is UPF0154 protein SH1564 of Staphylococcus haemolyticus (strain JCSC1435).